The primary structure comprises 158 residues: 2-C-methyl-D-erythritol 2,4-cyclodiphosphate synthase (158 aa).

A divalent metal cation contacts are provided by aspartate 8 and histidine 10. Residues 8–10 and 34–35 each bind 4-CDP-2-C-methyl-D-erythritol 2-phosphate; these read DVH and HS. Histidine 42 lines the a divalent metal cation pocket. 4-CDP-2-C-methyl-D-erythritol 2-phosphate-binding positions include 56-58, 61-65, 100-106, 132-135, phenylalanine 139, and arginine 142; these read DIG, FPDTD, AQRPKMA, and TTEE.

The protein belongs to the IspF family. As to quaternary structure, homotrimer. A divalent metal cation is required as a cofactor.

It catalyses the reaction 4-CDP-2-C-methyl-D-erythritol 2-phosphate = 2-C-methyl-D-erythritol 2,4-cyclic diphosphate + CMP. It functions in the pathway isoprenoid biosynthesis; isopentenyl diphosphate biosynthesis via DXP pathway; isopentenyl diphosphate from 1-deoxy-D-xylulose 5-phosphate: step 4/6. Functionally, involved in the biosynthesis of isopentenyl diphosphate (IPP) and dimethylallyl diphosphate (DMAPP), two major building blocks of isoprenoid compounds. Catalyzes the conversion of 4-diphosphocytidyl-2-C-methyl-D-erythritol 2-phosphate (CDP-ME2P) to 2-C-methyl-D-erythritol 2,4-cyclodiphosphate (ME-CPP) with a corresponding release of cytidine 5-monophosphate (CMP). The polypeptide is 2-C-methyl-D-erythritol 2,4-cyclodiphosphate synthase (Pelobacter propionicus (strain DSM 2379 / NBRC 103807 / OttBd1)).